Consider the following 1342-residue polypeptide: ATP-dependent RNA helicase TDRD9 (1342 aa).

Over residues 31 to 63 (KAEAEDNATEVRSDKAFSELSSPEKEKSDDGNQ) the composition is skewed to basic and acidic residues. A disordered region spans residues 31–81 (KAEAEDNATEVRSDKAFSELSSPEKEKSDDGNQRRKRAQLPTGPGTSPPSL). Residues 99–265 (VSLIENNSVV…FGSPIRNQMN (167 aa)) form the Helicase ATP-binding domain. 112–119 (GATGSGKT) contacts ATP. A DEAH box motif is present at residues 211-214 (DEVH). The Helicase C-terminal domain maps to 317–503 (SLIQSFDEME…LLKVKLLDMG (187 aa)). One can recognise a Tudor domain in the interval 901 to 962 (SLYPNLLCVA…RELPSDLMTP (62 aa)).

The protein belongs to the DEAD box helicase family. DEAH subfamily.

Its subcellular location is the cytoplasm. The protein resides in the nucleus. The enzyme catalyses ATP + H2O = ADP + phosphate + H(+). ATP-binding RNA helicase which plays a central role during spermatogenesis by repressing transposable elements and preventing their mobilization, which is essential for the germline integrity. Acts via the piRNA metabolic process, which mediates the repression of transposable elements during meiosis by forming complexes composed of piRNAs and Piwi proteins and governs the methylation and subsequent repression of transposons. Acts downstream of piRNA biogenesis: exclusively required for transposon silencing in the nucleus, suggesting that it acts as a nuclear effector in the nucleus together with piwil4. In Danio rerio (Zebrafish), this protein is ATP-dependent RNA helicase TDRD9.